We begin with the raw amino-acid sequence, 113 residues long: Ribulose bisphosphate carboxylase small subunit (113 aa).

It belongs to the RuBisCO small chain family. As to quaternary structure, heterohexadecamer of 8 large and 8 small subunits. Forms a CsoS2-CsoS1-RuBisCO complex.

The protein localises to the carboxysome. RuBisCO catalyzes two reactions: the carboxylation of D-ribulose 1,5-bisphosphate, the primary event in carbon dioxide fixation, as well as the oxidative fragmentation of the pentose substrate in the photorespiration process. Both reactions occur simultaneously and in competition at the same active site. Although the small subunit is not catalytic it is essential for maximal activity. The polypeptide is Ribulose bisphosphate carboxylase small subunit (Prochlorococcus marinus (strain MIT 9313)).